We begin with the raw amino-acid sequence, 569 residues long: Hemin/hemoglobin-binding protein 2 (569 aa).

Positions Met1–Ala28 are cleaved as a signal peptide. 3 consecutive NEAT domains span residues Lys34–Ile173, Leu184–Ala307, and Leu360–Ile484. Heme contacts are provided by residues Ser204 to Ser205, Tyr280, and Tyr289. The tract at residues Ala307 to Lys357 is disordered. Residues Thr502–Ala511 show a composition bias toward polar residues. Residues Thr502–Ala537 form a disordered region. Positions Asn536–Asn540 match the NXZTN sorting signal motif. Pentaglycyl murein peptidoglycan amidated threonine is present on Thr539. Positions Asn540–Ser569 are cleaved as a propeptide — removed by sortase B.

Its subcellular location is the cell surface. The protein resides in the secreted. The protein localises to the cell wall. With respect to regulation, is overexpressed in mecA, clpC and clpP mutants, suggesting the protein level is controlled by MecA, ClpC and ClpP (at protein level). Functionally, acts as an extracellular and cell wall-bound hemophore; scavenges host heme and hemoglobin from the environment and also serves as a cell wall receptor for both. At low hemin (Hn) and hemoglobin (Hb) concentrations adsorbs Hn/Hb and presumably directs it to membrane transporters. Soluble Hbp2 can probably pass Hn/Hb to cell wall-anchored Hbp2, and both forms can accept Hn/Hb from Hbp1. May be involved in crossing the digestive barrier in infected animals. Binds host hemin. Binds host hemoglobin with affinity in the nanomolar range. The sequence is that of Hemin/hemoglobin-binding protein 2 from Listeria monocytogenes serovar 1/2a (strain ATCC BAA-679 / EGD-e).